We begin with the raw amino-acid sequence, 413 residues long: Serine/threonine transporter SstT (413 aa).

The next 9 membrane-spanning stretches (helical) occupy residues 11–31, 43–63, 82–102, 141–161, 192–212, 216–236, 298–318, 339–359, and 363–383; these read IANG…VILA, FLGS…VFVL, IIGL…LFSF, ALLT…GITM, IGIF…ALAG, LLMV…PIIV, MGGA…TLGI, ASGV…LFGI, and VAMQ…SAET.

The protein belongs to the dicarboxylate/amino acid:cation symporter (DAACS) (TC 2.A.23) family.

It is found in the cell inner membrane. The catalysed reaction is L-serine(in) + Na(+)(in) = L-serine(out) + Na(+)(out). The enzyme catalyses L-threonine(in) + Na(+)(in) = L-threonine(out) + Na(+)(out). Its function is as follows. Involved in the import of serine and threonine into the cell, with the concomitant import of sodium (symport system). The protein is Serine/threonine transporter SstT of Shewanella frigidimarina (strain NCIMB 400).